Here is a 41-residue protein sequence, read N- to C-terminus: Iota-conotoxin-like r11d (41 aa).

Intrachain disulfides connect Cys2-Cys16, Cys9-Cys19, Cys15-Cys24, and Cys18-Cys35. Pro8 carries the 4-hydroxyproline modification. 4-hydroxyproline is present on Pro26.

Position 41 corresponds to a L-threonine, and not a D-threonine as firstly supposed. Expressed by the venom duct.

It is found in the secreted. In terms of biological role, iota-conotoxins bind to voltage-gated sodium channels (Nav) and act as agonists by shifting the voltage-dependence of activation to more hyperpolarized levels. Both natural (L-Thr form) and synthetic (D-Thr form) peptides cause paralysis and death following intracranial injection and grooming and hypersensitivity upon intraperitoneal injection into mice. The L-Thr form of the peptide is 7-fold more potent than the D-Thr form. Both natural peptide (L-Thr form) and synthetic peptide (D-Thr form) are active on nerve, and on muscle. The protein is Iota-conotoxin-like r11d of Conus radiatus (Rayed cone).